The following is a 107-amino-acid chain: Antimicrobial peptide microplusin (107 aa).

Residues 1–19 form the signal peptide; that stretch reads MKSLLVCLVLAVVVLVASG. 3 disulfide bridges follow: C25/C60, C38/C88, and C49/C54. Residues 86–107 are disordered; it reads TDCDHSHGHEHSHGHEHGHGHH. The segment covering 87–107 has biased composition (basic and acidic residues); sequence DCDHSHGHEHSHGHEHGHGHH.

The protein localises to the secreted. In terms of biological role, has bacteriostatic activity against Gram-positive bacteria, but not against Gram-negative bacteria. Has fungistatic activity against some but not all fungi. Binds and sequesters copper and iron ions. Copper-chelating is crucial for antimicrobial activity against M.luteus. The chain is Antimicrobial peptide microplusin from Ixodes scapularis (Black-legged tick).